The primary structure comprises 484 residues: uncharacterized protein (484 aa).

Residues proline 25 to leucine 45 traverse the membrane as a helical segment. Residues leucine 384–asparagine 419 enclose the EF-hand domain. The Ca(2+) site is built by aspartate 397, aspartate 399, asparagine 401, and glutamate 408.

It is found in the membrane. This is an uncharacterized protein from Arabidopsis thaliana (Mouse-ear cress).